Here is a 214-residue protein sequence, read N- to C-terminus: Sugar transporter SWEET1 (214 aa).

A run of 7 helical transmembrane segments spans residues 3–23, 38–58, 65–85, 93–113, 125–145, 157–177, and 181–201; these read WMWL…SSGL, IQFL…YYGY, LIIV…AYIL, VVSQ…YFTL, LGLF…ADLA, SFPL…YGWV, and LYIT…FWLF. The MtN3/slv 1 domain maps to 6 to 89; that stretch reads LLSGACIVFT…MAAYILYSLE (84 aa). Residues 124–207 form the MtN3/slv 2 domain; sequence QLGLFCSIFT…FWLFSRYPPD (84 aa).

This sequence belongs to the SWEET sugar transporter family.

The protein localises to the golgi apparatus membrane. Its subcellular location is the cell membrane. In terms of biological role, mediates sugar transport across membranes. The polypeptide is Sugar transporter SWEET1 (slc50a1) (Xenopus tropicalis (Western clawed frog)).